The primary structure comprises 213 residues: N-(5'-phosphoribosyl)anthranilate isomerase (213 aa).

It belongs to the TrpF family.

It carries out the reaction N-(5-phospho-beta-D-ribosyl)anthranilate = 1-(2-carboxyphenylamino)-1-deoxy-D-ribulose 5-phosphate. Its pathway is amino-acid biosynthesis; L-tryptophan biosynthesis; L-tryptophan from chorismate: step 3/5. The polypeptide is N-(5'-phosphoribosyl)anthranilate isomerase (Leptospira interrogans serogroup Icterohaemorrhagiae serovar copenhageni (strain Fiocruz L1-130)).